The sequence spans 318 residues: 2-oxoacid:ferredoxin oxidoreductase 1, subunit beta (318 aa).

[4Fe-4S] cluster is bound by residues Cys18, Cys21, and Cys52. Thiamine diphosphate contacts are provided by residues 50 to 53 (IGCS) and His69. Residue Asp94 coordinates Mg(2+). A thiamine diphosphate-binding site is contributed by 95–96 (GD). 2 residues coordinate Mg(2+): Asn122 and Val124. 126 to 127 (GL) contributes to the thiamine diphosphate binding site. Cys201 is a [4Fe-4S] cluster binding site.

Heterodimer composed of an alpha and a beta subunit. The cofactor is [4Fe-4S] cluster. Requires thiamine diphosphate as cofactor. Mg(2+) is required as a cofactor.

It carries out the reaction a 2-oxocarboxylate + 2 oxidized [2Fe-2S]-[ferredoxin] + CoA = an acyl-CoA + 2 reduced [2Fe-2S]-[ferredoxin] + CO2 + H(+). In terms of biological role, catalyzes the coenzyme A-dependent oxidative decarboxylation of different 2-oxoacids such as pyruvate, 2-oxobutyrate and glyoxylate to form their CoA derivatives. The chain is 2-oxoacid:ferredoxin oxidoreductase 1, subunit beta from Aeropyrum pernix (strain ATCC 700893 / DSM 11879 / JCM 9820 / NBRC 100138 / K1).